The sequence spans 197 residues: UPF0301 protein AnaeK_4073 (197 aa).

Belongs to the UPF0301 (AlgH) family.

This is UPF0301 protein AnaeK_4073 from Anaeromyxobacter sp. (strain K).